Reading from the N-terminus, the 693-residue chain is MGLTQRELEIIRERLGREPTAAELAFFTSHWSEHCSYKSTKMWLRELPGSAPWVVRGRGTDAPLVEVAHGLYVSFKIESHNHPSAVDPYNGAATGVGGIIRDILTVGATPIALLVNLHFGPPEDPHAKWIFSNVIKGISDYGNRVGVPVVGGETWFDEDFTYTPIVLATCVGVVEAEAVPKGYVEPGDYIVVAGLGADRSGLGGSAFASKTLEGGEDLGAIQVADPLMGKKLIDVVKEVSRCVKFIKDLGGGGLATALAELSHWFSLGVEFHLDKLHVRDASALPEELLISETQERLIFVISPRDLPCLEEALRKYEVPYSIPGRFVKSDRVLVMWKGVKIVDIPISLADGAPEILWPQEPYQPSDIPEIPEPPIDKAIDIVLSSPNVAKKESIYMRFDFDVGVRTAVKPGEGDAAVLKLYQRGQLGLVVKGDANPRYTFLDPRLGAANAFVKAYRNVAVVGGVPLAAVDSINVGSPERPQVYWRFVQAVQGLKEAATELEVPIVGGKVSLYNEYMGRPIKPTVAVVVLGKIDDVSKANRALWHDGDKIYIWGVTKGEVGGSEYLKRVHGILAGRPPSIDYAAEKEIVAVIQSWLGKISGATDVGLGGLITALAKMAINSGIGGEIDVCKAPAETTRLDYLLFSESNGRFIATGAEGPGVAIGEAYGEEFVVKCGGTLIYKRGVEELKRLMSL.

The active site involves histidine 34. Positions 37 and 76 each coordinate ATP. Glutamate 78 is a binding site for Mg(2+). Substrate is bound by residues serine 79–histidine 82 and arginine 101. Histidine 80 serves as the catalytic Proton acceptor. Aspartate 102 serves as a coordination point for Mg(2+). A substrate-binding site is contributed by glutamine 222. Aspartate 248 serves as a coordination point for Mg(2+). Substrate is bound at residue glutamate 292–glutamine 294. ATP-binding residues include aspartate 470 and glycine 507. Serine 510 contributes to the substrate binding site.

Belongs to the FGAMS family. As to quaternary structure, monomer. Part of the FGAM synthase complex composed of 1 PurL, 1 PurQ and 2 PurS subunits.

The protein resides in the cytoplasm. The catalysed reaction is N(2)-formyl-N(1)-(5-phospho-beta-D-ribosyl)glycinamide + L-glutamine + ATP + H2O = 2-formamido-N(1)-(5-O-phospho-beta-D-ribosyl)acetamidine + L-glutamate + ADP + phosphate + H(+). It functions in the pathway purine metabolism; IMP biosynthesis via de novo pathway; 5-amino-1-(5-phospho-D-ribosyl)imidazole from N(2)-formyl-N(1)-(5-phospho-D-ribosyl)glycinamide: step 1/2. Part of the phosphoribosylformylglycinamidine synthase complex involved in the purines biosynthetic pathway. Catalyzes the ATP-dependent conversion of formylglycinamide ribonucleotide (FGAR) and glutamine to yield formylglycinamidine ribonucleotide (FGAM) and glutamate. The FGAM synthase complex is composed of three subunits. PurQ produces an ammonia molecule by converting glutamine to glutamate. PurL transfers the ammonia molecule to FGAR to form FGAM in an ATP-dependent manner. PurS interacts with PurQ and PurL and is thought to assist in the transfer of the ammonia molecule from PurQ to PurL. In Pyrobaculum islandicum (strain DSM 4184 / JCM 9189 / GEO3), this protein is Phosphoribosylformylglycinamidine synthase subunit PurL.